A 439-amino-acid chain; its full sequence is tRNA-2-methylthio-N(6)-dimethylallyladenosine synthase (439 aa).

Residues 2–116 form the MTTase N-terminal domain; sequence LKVYIETMGC…ISQVIHKEKA (115 aa). [4Fe-4S] cluster contacts are provided by Cys11, Cys47, Cys79, Cys149, Cys153, and Cys156. Residues 135–368 enclose the Radical SAM core domain; the sequence is KKAEVRSLLN…QNRHKEILEE (234 aa). The 67-residue stretch at 371-437 folds into the TRAM domain; that stretch reads RLEVGKTHVV…KGRLMATTKN (67 aa).

The protein belongs to the methylthiotransferase family. MiaB subfamily. As to quaternary structure, monomer. Requires [4Fe-4S] cluster as cofactor.

It localises to the cytoplasm. It catalyses the reaction N(6)-dimethylallyladenosine(37) in tRNA + (sulfur carrier)-SH + AH2 + 2 S-adenosyl-L-methionine = 2-methylsulfanyl-N(6)-dimethylallyladenosine(37) in tRNA + (sulfur carrier)-H + 5'-deoxyadenosine + L-methionine + A + S-adenosyl-L-homocysteine + 2 H(+). Catalyzes the methylthiolation of N6-(dimethylallyl)adenosine (i(6)A), leading to the formation of 2-methylthio-N6-(dimethylallyl)adenosine (ms(2)i(6)A) at position 37 in tRNAs that read codons beginning with uridine. This chain is tRNA-2-methylthio-N(6)-dimethylallyladenosine synthase, found in Helicobacter acinonychis (strain Sheeba).